Here is a 417-residue protein sequence, read N- to C-terminus: Squalene synthase (417 aa).

Residues R52 and R77 each coordinate NADP(+). Residues D80, E83, and D84 each contribute to the Mg(2+) site. R218 provides a ligand contact to NADP(+). Residues 284–304 traverse the membrane as a helical segment; that stretch reads SIFNFCAIPQVMAIATLAACY. Positions 315 and 317 each coordinate NADP(+). A helical membrane pass occupies residues 384-404; the sequence is PIYLSFVMLLAALSWQYLSTL.

It belongs to the phytoene/squalene synthase family. Requires Mg(2+) as cofactor.

The protein resides in the endoplasmic reticulum membrane. It catalyses the reaction 2 (2E,6E)-farnesyl diphosphate + NADPH + H(+) = squalene + 2 diphosphate + NADP(+). It carries out the reaction 2 (2E,6E)-farnesyl diphosphate + NADH + H(+) = squalene + 2 diphosphate + NAD(+). The catalysed reaction is presqualene diphosphate + NADH + H(+) = squalene + diphosphate + NAD(+). The enzyme catalyses presqualene diphosphate + NADPH + H(+) = squalene + diphosphate + NADP(+). It catalyses the reaction 2 (2E,6E)-farnesyl diphosphate = presqualene diphosphate + diphosphate. The protein operates within terpene metabolism; lanosterol biosynthesis; lanosterol from farnesyl diphosphate: step 1/3. Catalyzes the condensation of 2 farnesyl pyrophosphate (FPP) moieties to form squalene. Proceeds in two distinct steps. In the first half-reaction, two molecules of FPP react to form the stable presqualene diphosphate intermediate (PSQPP), with concomitant release of a proton and a molecule of inorganic diphosphate. In the second half-reaction, PSQPP undergoes heterolysis, isomerization, and reduction with NADPH or NADH to form squalene. It is the first committed enzyme of the sterol biosynthesis pathway. This Bos taurus (Bovine) protein is Squalene synthase (FDFT1).